The chain runs to 677 residues: uncharacterized protein (677 aa).

Residues 1–87 are disordered; that stretch reads MGRHSKPDPE…PTGAEPIAAA (87 aa). Positions 17-29 are enriched in basic and acidic residues; it reads SDGHAAEQQHWED. Positions 51 to 64 are enriched in low complexity; the sequence is GHYSAVGGYSASGS. Helical transmembrane passes span 115 to 135, 192 to 212, 313 to 333, and 474 to 494; these read VSIGVIVALVAVVVMVAGVIL, VAVAVTSAGSDAVINGFIGKW, EAVAAASAPAGAPATAGIGAV, and ATLADTMVTASAGVAATIMLD.

Its subcellular location is the cell membrane. This is an uncharacterized protein from Mycobacterium tuberculosis (strain CDC 1551 / Oshkosh).